A 187-amino-acid chain; its full sequence is MFDLPKIEKAVKMILEAIGEDPNREGLEETPARVARMYQEIFAGLGEDPEEHLGKTFSEEHEEMVIVKDIRLFSMCEHHLIPFIGKAHVCYIPRNGNVTGLSKLARLVNGYARRPQLQERLTKQIADAIMKRLNPYGVVVVVEAEHLCMSMRGVRSPGARTVTSAVRGIFKKNEASRAEAMSLIMKS.

Zn(2+)-binding residues include Cys-76, His-79, and Cys-148.

It belongs to the GTP cyclohydrolase I family. As to quaternary structure, homomer.

The catalysed reaction is GTP + H2O = 7,8-dihydroneopterin 3'-triphosphate + formate + H(+). Its pathway is cofactor biosynthesis; 7,8-dihydroneopterin triphosphate biosynthesis; 7,8-dihydroneopterin triphosphate from GTP: step 1/1. In Desulforamulus reducens (strain ATCC BAA-1160 / DSM 100696 / MI-1) (Desulfotomaculum reducens), this protein is GTP cyclohydrolase 1.